The chain runs to 387 residues: Exodeoxyribonuclease 7 large subunit (387 aa).

It belongs to the XseA family. In terms of assembly, heterooligomer composed of large and small subunits.

Its subcellular location is the cytoplasm. The enzyme catalyses Exonucleolytic cleavage in either 5'- to 3'- or 3'- to 5'-direction to yield nucleoside 5'-phosphates.. Functionally, bidirectionally degrades single-stranded DNA into large acid-insoluble oligonucleotides, which are then degraded further into small acid-soluble oligonucleotides. This Campylobacter jejuni subsp. jejuni serotype O:23/36 (strain 81-176) protein is Exodeoxyribonuclease 7 large subunit.